A 45-amino-acid polypeptide reads, in one-letter code: DNA-directed RNA polymerase subunit Rpo12 (45 aa).

Zn(2+) contacts are provided by cysteine 8, cysteine 23, and cysteine 26.

Belongs to the archaeal Rpo12/eukaryotic RPC10 RNA polymerase subunit family. Part of the RNA polymerase complex. It depends on Zn(2+) as a cofactor.

Its subcellular location is the cytoplasm. It carries out the reaction RNA(n) + a ribonucleoside 5'-triphosphate = RNA(n+1) + diphosphate. DNA-dependent RNA polymerase (RNAP) catalyzes the transcription of DNA into RNA using the four ribonucleoside triphosphates as substrates. The protein is DNA-directed RNA polymerase subunit Rpo12 of Methanocella arvoryzae (strain DSM 22066 / NBRC 105507 / MRE50).